Here is a 277-residue protein sequence, read N- to C-terminus: Diaminopimelate epimerase (277 aa).

Residues asparagine 11 and asparagine 62 each coordinate substrate. Residue cysteine 71 is the Proton donor of the active site. Residues 72–73 (GN), asparagine 160, asparagine 193, and 211–212 (ER) each bind substrate. Cysteine 220 (proton acceptor) is an active-site residue. 221–222 (GT) lines the substrate pocket.

It belongs to the diaminopimelate epimerase family. Homodimer.

It is found in the cytoplasm. The enzyme catalyses (2S,6S)-2,6-diaminopimelate = meso-2,6-diaminopimelate. It functions in the pathway amino-acid biosynthesis; L-lysine biosynthesis via DAP pathway; DL-2,6-diaminopimelate from LL-2,6-diaminopimelate: step 1/1. In terms of biological role, catalyzes the stereoinversion of LL-2,6-diaminopimelate (L,L-DAP) to meso-diaminopimelate (meso-DAP), a precursor of L-lysine. The polypeptide is Diaminopimelate epimerase (Methanococcus maripaludis (strain C5 / ATCC BAA-1333)).